The following is a 315-amino-acid chain: Cell division protein FtsZ (315 aa).

Residues 55–57, Glu98, Arg102, and Asp146 each bind GTP; that span reads GTG.

It belongs to the FtsZ family. Homodimer. Polymerizes to form a dynamic ring structure in a strictly GTP-dependent manner. Interacts directly with several other division proteins.

Its subcellular location is the cytoplasm. Essential cell division protein that forms a contractile ring structure (Z ring) at the future cell division site. The regulation of the ring assembly controls the timing and the location of cell division. One of the functions of the FtsZ ring is to recruit other cell division proteins to the septum to produce a new cell wall between the dividing cells. Binds GTP and shows GTPase activity. The sequence is that of Cell division protein FtsZ from Wolbachia pipientis.